The primary structure comprises 361 residues: Chorismate synthase (361 aa).

Residues Arg48 and Arg54 each contribute to the NADP(+) site. FMN-binding positions include 125–127 (RSS), 238–239 (NA), Gly278, 293–297 (KPTSS), and Arg319.

This sequence belongs to the chorismate synthase family. As to quaternary structure, homotetramer. Requires FMNH2 as cofactor.

The enzyme catalyses 5-O-(1-carboxyvinyl)-3-phosphoshikimate = chorismate + phosphate. Its pathway is metabolic intermediate biosynthesis; chorismate biosynthesis; chorismate from D-erythrose 4-phosphate and phosphoenolpyruvate: step 7/7. Catalyzes the anti-1,4-elimination of the C-3 phosphate and the C-6 proR hydrogen from 5-enolpyruvylshikimate-3-phosphate (EPSP) to yield chorismate, which is the branch point compound that serves as the starting substrate for the three terminal pathways of aromatic amino acid biosynthesis. This reaction introduces a second double bond into the aromatic ring system. The sequence is that of Chorismate synthase from Escherichia coli O7:K1 (strain IAI39 / ExPEC).